The sequence spans 670 residues: UvrABC system protein B (670 aa).

Residues 26–183 (EGLEDGLAHQ…RRLAELQYAR (158 aa)) enclose the Helicase ATP-binding domain. 39 to 46 (GVTGSGKT) lines the ATP pocket. The Beta-hairpin motif lies at 92–115 (YYDYYQPEAYVPSSDTFIEKDAAV). Residues 431–597 (QVDDLLSEIR…GLNKKVSDVL (167 aa)) form the Helicase C-terminal domain. The 36-residue stretch at 630–665 (DQKIRELEAQMYTHAQNLEFELAAGLRDEIHQLREQ) folds into the UVR domain.

This sequence belongs to the UvrB family. Forms a heterotetramer with UvrA during the search for lesions. Interacts with UvrC in an incision complex.

Its subcellular location is the cytoplasm. In terms of biological role, the UvrABC repair system catalyzes the recognition and processing of DNA lesions. A damage recognition complex composed of 2 UvrA and 2 UvrB subunits scans DNA for abnormalities. Upon binding of the UvrA(2)B(2) complex to a putative damaged site, the DNA wraps around one UvrB monomer. DNA wrap is dependent on ATP binding by UvrB and probably causes local melting of the DNA helix, facilitating insertion of UvrB beta-hairpin between the DNA strands. Then UvrB probes one DNA strand for the presence of a lesion. If a lesion is found the UvrA subunits dissociate and the UvrB-DNA preincision complex is formed. This complex is subsequently bound by UvrC and the second UvrB is released. If no lesion is found, the DNA wraps around the other UvrB subunit that will check the other stand for damage. This Serratia proteamaculans (strain 568) protein is UvrABC system protein B.